The chain runs to 142 residues: uncharacterized protein (142 aa).

One can recognise a Peptidase C39 domain in the interval 18-137 (QSRSYSCGPA…RIFTGNVLVV (120 aa)).

This is an uncharacterized protein from Methanothermobacter thermautotrophicus (strain ATCC 29096 / DSM 1053 / JCM 10044 / NBRC 100330 / Delta H) (Methanobacterium thermoautotrophicum).